Reading from the N-terminus, the 73-residue chain is Large ribosomal subunit protein bL31 (73 aa).

Zn(2+) is bound by residues C16, C18, C37, and C40.

The protein belongs to the bacterial ribosomal protein bL31 family. Type A subfamily. As to quaternary structure, part of the 50S ribosomal subunit. It depends on Zn(2+) as a cofactor.

In terms of biological role, binds the 23S rRNA. This Blochmanniella floridana protein is Large ribosomal subunit protein bL31.